A 930-amino-acid polypeptide reads, in one-letter code: Translation initiation factor IF-2 (930 aa).

Over residues 50 to 67 (FKPAAAPKVEAKPAAPKV) the composition is skewed to low complexity. Disordered regions lie at residues 50-217 (FKPA…SSEE) and 260-346 (EVVP…HELP). Basic and acidic residues-rich tracts occupy residues 68-90 (SAEK…EAKP) and 110-125 (FKAE…AERR). The segment covering 129-141 (KGNNRDQQQNGNR) has biased composition (low complexity). 2 stretches are compositionally biased toward basic and acidic residues: residues 157-167 (RDNRRFNDQAK) and 262-295 (VPEK…DGPR). The segment covering 309 to 318 (NQKNSNWNNN) has biased composition (low complexity). The span at 337 to 346 (VTERKFHELP) shows a compositional bias: basic and acidic residues. One can recognise a tr-type G domain in the interval 432–599 (ERPPVVTIMG…TVLLVAEIQE (168 aa)). Residues 441–448 (GHVDHGKT) are G1. Residue 441 to 448 (GHVDHGKT) participates in GTP binding. A G2 region spans residues 466–470 (GITQH). The segment at 487-490 (DTPG) is G3. Residues 487–491 (DTPGH) and 541–544 (NKID) contribute to the GTP site. The interval 541 to 544 (NKID) is G4. The interval 577–579 (SAK) is G5.

Belongs to the TRAFAC class translation factor GTPase superfamily. Classic translation factor GTPase family. IF-2 subfamily.

It is found in the cytoplasm. Its function is as follows. One of the essential components for the initiation of protein synthesis. Protects formylmethionyl-tRNA from spontaneous hydrolysis and promotes its binding to the 30S ribosomal subunits. Also involved in the hydrolysis of GTP during the formation of the 70S ribosomal complex. The protein is Translation initiation factor IF-2 of Streptococcus pneumoniae (strain P1031).